The primary structure comprises 285 residues: Pantothenate synthetase (285 aa).

An ATP-binding site is contributed by 30–37; that stretch reads MGYLHAGH. The active-site Proton donor is His-37. Gln-61 contacts (R)-pantoate. Position 61 (Gln-61) interacts with beta-alanine. ATP is bound at residue 147–150; that stretch reads GQKD. Gln-153 contributes to the (R)-pantoate binding site. Residues Val-176 and 184–187 contribute to the ATP site; that span reads LSSR.

Belongs to the pantothenate synthetase family. As to quaternary structure, homodimer.

Its subcellular location is the cytoplasm. It catalyses the reaction (R)-pantoate + beta-alanine + ATP = (R)-pantothenate + AMP + diphosphate + H(+). Its pathway is cofactor biosynthesis; (R)-pantothenate biosynthesis; (R)-pantothenate from (R)-pantoate and beta-alanine: step 1/1. In terms of biological role, catalyzes the condensation of pantoate with beta-alanine in an ATP-dependent reaction via a pantoyl-adenylate intermediate. This is Pantothenate synthetase from Solidesulfovibrio magneticus (strain ATCC 700980 / DSM 13731 / RS-1) (Desulfovibrio magneticus).